Here is a 199-residue protein sequence, read N- to C-terminus: Chromophore lyase CpcT/CpeT 2 (199 aa).

It belongs to the CpcT/CpeT biliprotein lyase family.

Functionally, covalently attaches a chromophore to Cys residue(s) of phycobiliproteins. The polypeptide is Chromophore lyase CpcT/CpeT 2 (Synechococcus sp. (strain JA-3-3Ab) (Cyanobacteria bacterium Yellowstone A-Prime)).